We begin with the raw amino-acid sequence, 185 residues long: Large ribosomal subunit protein uL22 (185 aa).

A disordered region spans residues 158–185; that stretch reads AKPREDEPHKKKISKKKLARAKEKMLRE. A compositionally biased stretch (basic residues) spans 167–176; it reads KKKISKKKLA.

This sequence belongs to the universal ribosomal protein uL22 family.

The protein is Large ribosomal subunit protein uL22 (RpL17) of Diaphorina citri (Asian citrus psyllid).